A 546-amino-acid chain; its full sequence is Chaperonin GroEL 5 (546 aa).

Residues 30 to 33, K51, 87 to 91, G415, and D495 contribute to the ATP site; these read TLGP and DGTTT.

It belongs to the chaperonin (HSP60) family. As to quaternary structure, forms a cylinder of 14 subunits composed of two heptameric rings stacked back-to-back. Interacts with the co-chaperonin GroES.

It is found in the cytoplasm. The catalysed reaction is ATP + H2O + a folded polypeptide = ADP + phosphate + an unfolded polypeptide.. In terms of biological role, together with its co-chaperonin GroES, plays an essential role in assisting protein folding. The GroEL-GroES system forms a nano-cage that allows encapsulation of the non-native substrate proteins and provides a physical environment optimized to promote and accelerate protein folding. This is Chaperonin GroEL 5 from Paraburkholderia xenovorans (strain LB400).